Consider the following 216-residue polypeptide: Superoxide dismutase [Mn], mitochondrial (216 aa).

The N-terminal 18 residues, 1–18 (MSFLNRNLSRTIKAAVRG), are a transit peptide targeting the mitochondrion. H44, H92, D176, and H180 together coordinate Mn(2+).

This sequence belongs to the iron/manganese superoxide dismutase family. Requires Mn(2+) as cofactor.

The protein localises to the mitochondrion matrix. It carries out the reaction 2 superoxide + 2 H(+) = H2O2 + O2. Its function is as follows. Destroys superoxide anion radicals which are normally produced within the cells and which are toxic to biological systems. This chain is Superoxide dismutase [Mn], mitochondrial (Sod2), found in Glossina morsitans morsitans (Savannah tsetse fly).